The primary structure comprises 91 residues: Large ribosomal subunit protein bL31B (91 aa).

The protein belongs to the bacterial ribosomal protein bL31 family. Type B subfamily. In terms of assembly, part of the 50S ribosomal subunit.

This is Large ribosomal subunit protein bL31B from Neisseria meningitidis serogroup B (strain ATCC BAA-335 / MC58).